The chain runs to 138 residues: ATP synthase epsilon chain (138 aa).

This sequence belongs to the ATPase epsilon chain family. F-type ATPases have 2 components, CF(1) - the catalytic core - and CF(0) - the membrane proton channel. CF(1) has five subunits: alpha(3), beta(3), gamma(1), delta(1), epsilon(1). CF(0) has three main subunits: a, b and c.

It localises to the cell inner membrane. Its function is as follows. Produces ATP from ADP in the presence of a proton gradient across the membrane. In Polynucleobacter necessarius subsp. necessarius (strain STIR1), this protein is ATP synthase epsilon chain.